A 526-amino-acid polypeptide reads, in one-letter code: Seipin-2 (526 aa).

Positions 33–77 (PIRSNSHQPSSLLRRRKSAHRRDLISSDIETEPSSSSDGFDVGEK) are disordered. Over residues 58 to 70 (SSDIETEPSSSSD) the composition is skewed to low complexity. Transmembrane regions (helical) follow at residues 195–215 (SLLT…FDPF), 224–243 (FLMA…MNPF), 258–278 (FGWG…LLVS), and 483–503 (LFVW…LVCC).

Belongs to the seipin family. In terms of tissue distribution, expressed in seeds, seedlings, leaves, stems and roots. Not detected in flowers.

Its subcellular location is the endoplasmic reticulum membrane. Its function is as follows. Involved in lipid metabolism and lipid droplet (LD) morphology, number, and size. Supports the formation of small-sized LDs and modulates triacylglycerol accumulation. Induces probably a reorganization of the endoplasmic reticulum into LD-forming domains. This Arabidopsis thaliana (Mouse-ear cress) protein is Seipin-2.